The following is a 1061-amino-acid chain: Protein pid-5 (1061 aa).

This sequence belongs to the peptidase M24B family. May interact with pid-2, app-1 and prmt-5.

The protein localises to the cytoplasm. Its subcellular location is the perinuclear region. The protein resides in the P-body. Its function is as follows. Together with pid-4, it is involved in gene silencing mediated by a class of 21 nucleotide PIWI-interacting RNAs (piRNAs) that possess a uracil residue at the 5'-end (also called 21U-RNAs) and guide the Piwi protein prg-1 to its DNA targets for silencing. Together with pid-4, it is required for the biogenesis of secondary and tertiary 22G-siRNAs. Specifically, promotes the production of 22G-siRNAs from the 5' end of target mRNAs. Together with pid-4, plays a role in small RNA-directed transgenerational epigenetic inheritance (also called RNAe) over several generations and germline immortality. Together with pid-4, plays a role in the formation of liquid-like condensates in the cytoplasm called Z granules. This Caenorhabditis elegans protein is Protein pid-5.